Reading from the N-terminus, the 329-residue chain is Cytosolic arginine sensor for mTORC1 subunit 2 (329 aa).

2 consecutive ACT domains span residues 72–140 and 262–322; these read ADAT…HTLS and ELWK…HALK.

The protein belongs to the GATS family. Forms homodimers and heterodimers with CASTOR1. Interacts with the GATOR2 complex which is composed of MIOS, SEC13, SEH1L, WDR24 and WDR59; the interaction is not regulated by arginine.

It localises to the cytoplasm. The protein localises to the cytosol. Functions as a negative regulator of the TORC1 signaling pathway through the GATOR complex. As part of homodimers or heterodimers with CASTOR1, directly binds and inhibits the GATOR subcomplex GATOR2 and thereby mTORC1. Does not directly bind arginine, but binding of arginine to CASTOR1 disrupts the interaction of CASTOR2-containing heterodimers with GATOR2 which can in turn activate mTORC1 and the TORC1 signaling pathway. The sequence is that of Cytosolic arginine sensor for mTORC1 subunit 2 from Mus musculus (Mouse).